Consider the following 205-residue polypeptide: Ribosome maturation factor RimP (205 aa).

It belongs to the RimP family.

Its subcellular location is the cytoplasm. Its function is as follows. Required for maturation of 30S ribosomal subunits. The polypeptide is Ribosome maturation factor RimP (Sinorhizobium medicae (strain WSM419) (Ensifer medicae)).